Reading from the N-terminus, the 416-residue chain is Multifunctional CCA protein (416 aa).

ATP-binding residues include Gly-8 and Arg-11. CTP contacts are provided by Gly-8 and Arg-11. Residues Asp-21 and Asp-23 each contribute to the Mg(2+) site. 3 residues coordinate ATP: Arg-91, Arg-138, and Arg-141. The CTP site is built by Arg-91, Arg-138, and Arg-141. One can recognise an HD domain in the interval 229-331 (TGLHQELVSD…YELLQRCDAF (103 aa)).

This sequence belongs to the tRNA nucleotidyltransferase/poly(A) polymerase family. Bacterial CCA-adding enzyme type 1 subfamily. In terms of assembly, monomer. Can also form homodimers and oligomers. Requires Mg(2+) as cofactor. It depends on Ni(2+) as a cofactor.

The catalysed reaction is a tRNA precursor + 2 CTP + ATP = a tRNA with a 3' CCA end + 3 diphosphate. It carries out the reaction a tRNA with a 3' CCA end + 2 CTP + ATP = a tRNA with a 3' CCACCA end + 3 diphosphate. Catalyzes the addition and repair of the essential 3'-terminal CCA sequence in tRNAs without using a nucleic acid template. Adds these three nucleotides in the order of C, C, and A to the tRNA nucleotide-73, using CTP and ATP as substrates and producing inorganic pyrophosphate. tRNA 3'-terminal CCA addition is required both for tRNA processing and repair. Also involved in tRNA surveillance by mediating tandem CCA addition to generate a CCACCA at the 3' terminus of unstable tRNAs. While stable tRNAs receive only 3'-terminal CCA, unstable tRNAs are marked with CCACCA and rapidly degraded. The chain is Multifunctional CCA protein from Xylella fastidiosa (strain M12).